We begin with the raw amino-acid sequence, 706 residues long: Polyribonucleotide nucleotidyltransferase (706 aa).

The Mg(2+) site is built by D486 and D492. The KH domain occupies 552-611 (PRIIAMKINPEKIRDVIGKGGAVIRALTEETGTQIDIQEDGSVKIACTSMEAGELAKKRI). An S1 motif domain is found at 621-689 (GKVYEGPVIK…EKGRLRLSMK (69 aa)).

It belongs to the polyribonucleotide nucleotidyltransferase family. Mg(2+) serves as cofactor.

It localises to the cytoplasm. It catalyses the reaction RNA(n+1) + phosphate = RNA(n) + a ribonucleoside 5'-diphosphate. Its function is as follows. Involved in mRNA degradation. Catalyzes the phosphorolysis of single-stranded polyribonucleotides processively in the 3'- to 5'-direction. This is Polyribonucleotide nucleotidyltransferase from Thiobacillus denitrificans (strain ATCC 25259 / T1).